The following is a 578-amino-acid chain: Phosphatase DCR2 (578 aa).

116–123 (GRRWFGKS) is an ATP binding site.

It localises to the cytoplasm. Functionally, required for cell cycle progression. Has a role in the completion of START. This Saccharomyces cerevisiae (strain ATCC 204508 / S288c) (Baker's yeast) protein is Phosphatase DCR2 (DCR2).